Reading from the N-terminus, the 375-residue chain is Alcohol dehydrogenase 6 (375 aa).

Position 23 is a phosphoserine (serine 23). Residues cysteine 47, histidine 69, cysteine 99, cysteine 102, cysteine 105, cysteine 113, and cysteine 175 each contribute to the Zn(2+) site. NAD(+) contacts are provided by residues 200-205, aspartate 224, lysine 229, 293-295, and arginine 370; these read GLGGVG and VGL.

It belongs to the zinc-containing alcohol dehydrogenase family. Class-V subfamily. As to quaternary structure, dimer. The cofactor is Zn(2+).

It localises to the cytoplasm. It catalyses the reaction a primary alcohol + NAD(+) = an aldehyde + NADH + H(+). The catalysed reaction is a secondary alcohol + NAD(+) = a ketone + NADH + H(+). Alcohol dehydrogenase. Catalyzes the NAD-dependent oxidation of primary alcohols to the corresponding aldehydes. Oxidizes secondary alcohols to the corresponding ketones. The polypeptide is Alcohol dehydrogenase 6 (ADH6) (Pongo abelii (Sumatran orangutan)).